Reading from the N-terminus, the 378-residue chain is Ribosomal RNA large subunit methyltransferase G (378 aa).

The protein belongs to the methyltransferase superfamily. RlmG family.

The protein localises to the cytoplasm. It catalyses the reaction guanosine(1835) in 23S rRNA + S-adenosyl-L-methionine = N(2)-methylguanosine(1835) in 23S rRNA + S-adenosyl-L-homocysteine + H(+). Its function is as follows. Specifically methylates the guanine in position 1835 (m2G1835) of 23S rRNA. This chain is Ribosomal RNA large subunit methyltransferase G, found in Shewanella baltica (strain OS185).